The following is a 229-amino-acid chain: Small ribosomal subunit protein uS5 (229 aa).

An S5 DRBM domain is found at 61-124; that stretch reads LEEQVLDVKL…AHAKLSLIKV (64 aa).

It belongs to the universal ribosomal protein uS5 family. In terms of assembly, part of the 30S ribosomal subunit. Contacts protein S4.

With S4 and S12 plays an important role in translational accuracy. This chain is Small ribosomal subunit protein uS5, found in Methanococcus maripaludis (strain C7 / ATCC BAA-1331).